The primary structure comprises 85 residues: MFLSLLAITPASVSWTPKVALVMIICNVIAIAIGKATIKYPNEGAKMPSASFFGGMSHGAMLGCTSFGHLLGMGAILGLSTRGVF.

The next 2 helical transmembrane spans lie at 13 to 33 (VSWT…AIAI) and 59 to 79 (GAML…ILGL).

This sequence belongs to the PsaG/PsaK family.

The protein resides in the cellular thylakoid membrane. In Synechococcus sp. (strain WH7803), this protein is Photosystem I reaction center subunit PsaK.